Here is a 434-residue protein sequence, read N- to C-terminus: Serine hydroxymethyltransferase (434 aa).

(6S)-5,6,7,8-tetrahydrofolate contacts are provided by residues Leu133 and Gly137–Leu139. At Lys242 the chain carries N6-(pyridoxal phosphate)lysine.

Belongs to the SHMT family. As to quaternary structure, homodimer. The cofactor is pyridoxal 5'-phosphate.

The protein localises to the cytoplasm. It catalyses the reaction (6R)-5,10-methylene-5,6,7,8-tetrahydrofolate + glycine + H2O = (6S)-5,6,7,8-tetrahydrofolate + L-serine. Its pathway is one-carbon metabolism; tetrahydrofolate interconversion. It functions in the pathway amino-acid biosynthesis; glycine biosynthesis; glycine from L-serine: step 1/1. Catalyzes the reversible interconversion of serine and glycine with tetrahydrofolate (THF) serving as the one-carbon carrier. This reaction serves as the major source of one-carbon groups required for the biosynthesis of purines, thymidylate, methionine, and other important biomolecules. Also exhibits THF-independent aldolase activity toward beta-hydroxyamino acids, producing glycine and aldehydes, via a retro-aldol mechanism. In Methylobacterium radiotolerans (strain ATCC 27329 / DSM 1819 / JCM 2831 / NBRC 15690 / NCIMB 10815 / 0-1), this protein is Serine hydroxymethyltransferase.